The chain runs to 202 residues: Large ribosomal subunit protein bL25 (202 aa).

Residues 180 to 202 (PKQEAFEEDAEPSPGEEPEGENQ) form a disordered region. The segment covering 185-202 (FEEDAEPSPGEEPEGENQ) has biased composition (acidic residues).

This sequence belongs to the bacterial ribosomal protein bL25 family. CTC subfamily. As to quaternary structure, part of the 50S ribosomal subunit; part of the 5S rRNA/L5/L18/L25 subcomplex. Contacts the 5S rRNA. Binds to the 5S rRNA independently of L5 and L18.

Its function is as follows. This is one of the proteins that binds to the 5S RNA in the ribosome where it forms part of the central protuberance. This chain is Large ribosomal subunit protein bL25, found in Bacillus velezensis (strain DSM 23117 / BGSC 10A6 / LMG 26770 / FZB42) (Bacillus amyloliquefaciens subsp. plantarum).